The sequence spans 507 residues: ATP-dependent RNA helicase DDX47 (507 aa).

The span at 1–31 shows a compositional bias: acidic residues; that stretch reads MSETSEDEQTQLQTSDEEEDLGSEEEQEDED. Residues 1–58 form a disordered region; the sequence is MSETSEDEQTQLQTSDEEEDLGSEEEQEDEDNNHKEGDSEAALSGEDDKGSEDDAAEE. Positions 61–89 match the Q motif motif; it reads LTWKDLGLNEALCQACDELKWKAPSKIQR. Residues 92–263 enclose the Helicase ATP-binding domain; the sequence is IPVALQGKDV…RASLKDPVKV (172 aa). 105–112 lines the ATP pocket; it reads AETGSGKT. Positions 211–214 match the DEAD box motif; that stretch reads DEAD. The Helicase C-terminal domain occupies 290 to 434; that stretch reads YLVHILNELA…LYKCEEDEVM (145 aa). A coiled-coil region spans residues 426 to 453; sequence YKCEEDEVMALQERVAEAQRTAKLELKD. The span at 451–471 shows a compositional bias: basic and acidic residues; that stretch reads LKDLEDTRGGHKRGGDTHDDS. The tract at residues 451–507 is disordered; it reads LKDLEDTRGGHKRGGDTHDDSENFTGARKRMKPMGGTGGGGRKSFGKKNWSKGKQKR. The segment covering 494–507 has biased composition (basic residues); the sequence is SFGKKNWSKGKQKR.

It belongs to the DEAD box helicase family. DDX47/RRP3 subfamily.

Its subcellular location is the nucleus. It localises to the nucleolus. It carries out the reaction ATP + H2O = ADP + phosphate + H(+). Its function is as follows. Part of a translational control module, also containing ath/DHX33 and ais/DDX52, which coordinates germline stem cell differentiation with ribosome biogenesis during oogenesis. This module allows for coregulation of ribosomal proteins and non1/GTPBP4, a p53 repressor, preventing p53 stabilization, cell cycle arrest and loss of stem cell differentiation. With atos, adjusts transcription and translation of a subset of OXPHOS genes in macrophages to increase mitochondrial bioenergetics and allow tissue invasion. The sequence is that of ATP-dependent RNA helicase DDX47 from Drosophila melanogaster (Fruit fly).